A 260-amino-acid chain; its full sequence is Methionine-rich nacre protein (260 aa).

Positions methionine 1–serine 19 are cleaved as a signal peptide. The tract at residues glycine 23–asparagine 75 is disordered. Residues methionine 33–lysine 68 are compositionally biased toward polar residues.

In terms of tissue distribution, expressed in mantle distal zone, mantle margin and grafted pearl pockets. Not expressed in adductor muscle, gills, hemocytes or ungrafted pearl pockets. Within the mantle, specifically expressed in mineralizing outer epithelium cells (at protein level). After secretion incorporated into acid-insoluble nacre matrix of shell and pearl (at protein level). Not found in acid-insoluble matrix of shell prisms (at protein level).

It is found in the secreted. The polypeptide is Methionine-rich nacre protein (Margaritifera margaritifera (Freshwater pearl mussel)).